We begin with the raw amino-acid sequence, 271 residues long: Calretinin (271 aa).

EF-hand domains follow at residues 16–51 (LTAT…LEKA), 63–98 (NLGE…EENF), 107–142 (GSST…LLKK), 151–186 (KLQE…QENF), 195–230 (LTSE…LYEK), and 235–270 (MNIQ…SEPP). The Ca(2+) site is built by aspartate 29, aspartate 31, asparagine 33, tyrosine 35, glutamate 40, aspartate 76, asparagine 78, aspartate 80, lysine 82, glutamate 87, aspartate 120, aspartate 122, serine 124, tyrosine 126, glutamate 131, aspartate 164, asparagine 166, aspartate 168, lysine 170, glutamate 175, aspartate 208, aspartate 210, serine 212, tyrosine 214, and glutamate 219. A Phosphotyrosine modification is found at tyrosine 214.

Belongs to the calbindin family.

It is found in the synapse. Its subcellular location is the cell projection. It localises to the dendrite. Its function is as follows. Calcium-binding protein involved in calcium homeostasis and signal transduction. It plays a critical role in buffering intracellular calcium levels and modulating calcium-dependent signaling pathways. Predominantly expressed in specific neuronal populations, influences synaptic plasticity and neuronal excitability, contributing to learning and memory. During embryonic development, it facilitates neuronal differentiation and maturation. This Bos taurus (Bovine) protein is Calretinin (CALB2).